The chain runs to 51 residues: Cytochrome b559 subunit beta (51 aa).

Residues 26–42 (WLAVHALTVPTIFFLGA) form a helical membrane-spanning segment. His-30 provides a ligand contact to heme.

Belongs to the PsbE/PsbF family. In terms of assembly, heterodimer of an alpha subunit and a beta subunit. PSII is composed of 1 copy each of membrane proteins PsbA, PsbB, PsbC, PsbD, PsbE, PsbF, PsbH, PsbI, PsbJ, PsbK, PsbL, PsbM, PsbT, PsbX, Psb30/Ycf12, peripheral proteins PsbO, CyanoQ (PsbQ), PsbU, PsbV and a large number of cofactors. It forms dimeric complexes. The cofactor is heme b.

Its subcellular location is the cell inner membrane. Its function is as follows. This b-type cytochrome is tightly associated with the reaction center of photosystem II (PSII). PSII is a light-driven water:plastoquinone oxidoreductase that uses light energy to abstract electrons from H(2)O, generating O(2) and a proton gradient subsequently used for ATP formation. It consists of a core antenna complex that captures photons, and an electron transfer chain that converts photonic excitation into a charge separation. This is Cytochrome b559 subunit beta from Gloeobacter violaceus (strain ATCC 29082 / PCC 7421).